We begin with the raw amino-acid sequence, 360 residues long: Phospho-N-acetylmuramoyl-pentapeptide-transferase (360 aa).

The next 10 helical transmembrane spans lie at Y21–G41, T73–L93, I98–W118, W132–G152, V168–S188, G199–T219, A236–Y256, V263–L283, L288–V308, and V338–K358.

It belongs to the glycosyltransferase 4 family. MraY subfamily. Mg(2+) serves as cofactor.

It localises to the cell inner membrane. It catalyses the reaction UDP-N-acetyl-alpha-D-muramoyl-L-alanyl-gamma-D-glutamyl-meso-2,6-diaminopimeloyl-D-alanyl-D-alanine + di-trans,octa-cis-undecaprenyl phosphate = di-trans,octa-cis-undecaprenyl diphospho-N-acetyl-alpha-D-muramoyl-L-alanyl-D-glutamyl-meso-2,6-diaminopimeloyl-D-alanyl-D-alanine + UMP. Its pathway is cell wall biogenesis; peptidoglycan biosynthesis. Its function is as follows. Catalyzes the initial step of the lipid cycle reactions in the biosynthesis of the cell wall peptidoglycan: transfers peptidoglycan precursor phospho-MurNAc-pentapeptide from UDP-MurNAc-pentapeptide onto the lipid carrier undecaprenyl phosphate, yielding undecaprenyl-pyrophosphoryl-MurNAc-pentapeptide, known as lipid I. In Actinobacillus pleuropneumoniae serotype 5b (strain L20), this protein is Phospho-N-acetylmuramoyl-pentapeptide-transferase.